The chain runs to 277 residues: Putative phosphoenolpyruvate synthase regulatory protein (277 aa).

157 to 164 contacts ADP; it reads GVSRCGKT.

It belongs to the pyruvate, phosphate/water dikinase regulatory protein family. PSRP subfamily.

The enzyme catalyses [pyruvate, water dikinase] + ADP = [pyruvate, water dikinase]-phosphate + AMP + H(+). It carries out the reaction [pyruvate, water dikinase]-phosphate + phosphate + H(+) = [pyruvate, water dikinase] + diphosphate. Its function is as follows. Bifunctional serine/threonine kinase and phosphorylase involved in the regulation of the phosphoenolpyruvate synthase (PEPS) by catalyzing its phosphorylation/dephosphorylation. This chain is Putative phosphoenolpyruvate synthase regulatory protein, found in Citrobacter koseri (strain ATCC BAA-895 / CDC 4225-83 / SGSC4696).